The sequence spans 338 residues: Ferrochelatase (338 aa).

Positions 202 and 283 each coordinate Fe cation.

It belongs to the ferrochelatase family.

The protein resides in the cytoplasm. The catalysed reaction is heme b + 2 H(+) = protoporphyrin IX + Fe(2+). It participates in porphyrin-containing compound metabolism; protoheme biosynthesis; protoheme from protoporphyrin-IX: step 1/1. Its function is as follows. Catalyzes the ferrous insertion into protoporphyrin IX. In Acinetobacter baumannii (strain ATCC 17978 / DSM 105126 / CIP 53.77 / LMG 1025 / NCDC KC755 / 5377), this protein is Ferrochelatase.